The primary structure comprises 312 residues: tRNA uridine(34) hydroxylase (312 aa).

Positions 123–217 constitute a Rhodanese domain; that stretch reads SDPEVLLIDT…YLEEVPQEQS (95 aa). Cys177 functions as the Cysteine persulfide intermediate in the catalytic mechanism. Over residues 282–293 the composition is skewed to basic and acidic residues; that stretch reads ARERQKQIELAR. The interval 282-312 is disordered; sequence ARERQKQIELARQRNQPHPLGRDPRQSTLEN.

This sequence belongs to the TrhO family.

The enzyme catalyses uridine(34) in tRNA + AH2 + O2 = 5-hydroxyuridine(34) in tRNA + A + H2O. Its function is as follows. Catalyzes oxygen-dependent 5-hydroxyuridine (ho5U) modification at position 34 in tRNAs. The polypeptide is tRNA uridine(34) hydroxylase (Pseudomonas paraeruginosa (strain DSM 24068 / PA7) (Pseudomonas aeruginosa (strain PA7))).